We begin with the raw amino-acid sequence, 505 residues long: 11S globulin seed storage protein 1 (505 aa).

A signal peptide spans 1–24 (MAKPILLSIYLCLIIVALFNGCLA). Disulfide bonds link cysteine 37–cysteine 70 and cysteine 113–cysteine 323. In terms of domain architecture, Cupin type-1 1 spans 42 to 255 (LDALEPTNRI…AFNVDTETAR (214 aa)). 3 igE-binding regions span residues 118-132 (EESQRQSQQGQRREF), 208-219 (EQHRRQQQHQQR), and 238-249 (FDAEFLADAFNV). The interval 193–232 (GNPDDEFRPQGQQEYEQHRRQQQHQQRRGEHGEQQRDLGN) is disordered. Positions 219 to 228 (RRGEHGEQQR) are enriched in basic and acidic residues. Positions 282-316 (WSREEQEHEERKERERERESESERRQSRRGGRDDN) are enriched in basic and acidic residues. Positions 282–318 (WSREEQEHEERKERERERESESERRQSRRGGRDDNGL) are disordered. Positions 316-321 (NGLEET) match the NGXEET; peptidase recognition motif motif. The Cupin type-1 2 domain occupies 329–478 (ENIGDPSRAD…AFQIPREDAR (150 aa)).

It belongs to the 11S seed storage protein (globulins) family. As to quaternary structure, homohexamer. Each subunit is composed of an acidic and a basic chain derived from a single precursor and linked by a disulfide bond. As to expression, expressed in seeds (at protein level). Expressed in seeds.

Functionally, seed storage protein. The polypeptide is 11S globulin seed storage protein 1 (Carya illinoinensis (Pecan)).